The primary structure comprises 152 residues: Deoxyuridine 5'-triphosphate nucleotidohydrolase (152 aa).

Residues 71–73 (RSG), asparagine 84, 88–90 (LID), and methionine 98 contribute to the substrate site.

It belongs to the dUTPase family. Mg(2+) serves as cofactor.

It carries out the reaction dUTP + H2O = dUMP + diphosphate + H(+). The protein operates within pyrimidine metabolism; dUMP biosynthesis; dUMP from dCTP (dUTP route): step 2/2. In terms of biological role, this enzyme is involved in nucleotide metabolism: it produces dUMP, the immediate precursor of thymidine nucleotides and it decreases the intracellular concentration of dUTP so that uracil cannot be incorporated into DNA. This Salmonella agona (strain SL483) protein is Deoxyuridine 5'-triphosphate nucleotidohydrolase.